We begin with the raw amino-acid sequence, 536 residues long: Octopamine receptor beta-2R (536 aa).

Positions 1–26 (MLLCDGLGPEPPRQRHRNRTSAARIR) are disordered. Over 1 to 157 (MLLCDGLGPE…LDNIVWVFKA (157 aa)) the chain is Extracellular. Over residues 14–26 (QRHRNRTSAARIR) the composition is skewed to basic residues. N-linked (GlcNAc...) asparagine glycosylation is found at N18, N92, N113, and N126. The helical transmembrane segment at 158 to 178 (FVMLLIIIAAICGNLLVIISV) threads the bilayer. The Cytoplasmic segment spans residues 179–190 (MRVRKLRVITNY). The helical transmembrane segment at 191 to 211 (FVVSLAMADIMVAIMAMTFNF) threads the bilayer. Residues 212 to 233 (SVQVTGRWNFSPFLCDLWNSLD) lie on the Extracellular side of the membrane. A helical transmembrane segment spans residues 234-256 (VYFSTASILHLCCISVDRYYAIV). Over 257–270 (KPLKYPISMTKRVV) the chain is Cytoplasmic. The helical transmembrane segment at 271 to 291 (GIMLLNTWISPALLSFLPIFI) threads the bilayer. Residues 292–320 (GWYTTPQHQQFVIQNPTQCSFVVNKYYAV) are Extracellular-facing. The helical transmembrane segment at 321–341 (ISSSISFWIPCTIMIFTYLAI) threads the bilayer. At 342 to 412 (FREANRQEKQ…MKREHKAART (71 aa)) the chain is on the cytoplasmic side. A helical membrane pass occupies residues 413–433 (LGIIMGTFILCWLPFFLWYTL). Residues 434 to 444 (SMTCEECQVPD) are Extracellular-facing. Residues 445–465 (IVVSILFWIGYFNSTLNPLIY) form a helical membrane-spanning segment. Residues 466 to 536 (AYFNRDFREA…RRQSQMVDNL (71 aa)) lie on the Cytoplasmic side of the membrane.

Belongs to the G-protein coupled receptor 1 family. In the adult, expressed in the superior protocerebrum and the optic lobe medulla of the central nervous system, nurse cells of egg chambers in the ovary at oogenic stages 1-10, and spermatogonia and spermatocytes in the testis. Expressed in the oviduct epithelium. Also expressed in the spermatheca. Expressed in embryonic and larval ventral nerve cord and brain lobe, embryonic and larval salivary glands and larval imaginal disk and midgut. Also expressed in larval synaptic boutons.

It is found in the cell membrane. Functionally, autoreceptor for octopamine (OA), which is a neurotransmitter, neurohormone, and neuromodulator in invertebrates. Essential for ovulation and fertilization. During ovulation it mediates the OA-induced relaxation of the oviduct visceral muscles, by increasing cAMP levels and activating effectors such as calmodulin-dependent kinase II (CaMKII) and cAMP-dependent protein kinase A (PKA) pathways. Positively regulates synaptic growth; an action that is antagonized by Octbeta1R. The sequence is that of Octopamine receptor beta-2R from Drosophila melanogaster (Fruit fly).